Reading from the N-terminus, the 319-residue chain is Ribonuclease Z (319 aa).

Residues H62, H64, D66, H67, H145, D216, and H274 each coordinate Zn(2+). The active-site Proton acceptor is D66.

It belongs to the RNase Z family. Homodimer. Zn(2+) serves as cofactor.

It catalyses the reaction Endonucleolytic cleavage of RNA, removing extra 3' nucleotides from tRNA precursor, generating 3' termini of tRNAs. A 3'-hydroxy group is left at the tRNA terminus and a 5'-phosphoryl group is left at the trailer molecule.. In terms of biological role, zinc phosphodiesterase, which displays some tRNA 3'-processing endonuclease activity. Probably involved in tRNA maturation, by removing a 3'-trailer from precursor tRNA. In Synechococcus sp. (strain CC9902), this protein is Ribonuclease Z.